The following is a 1066-amino-acid chain: FHIP family protein GH13096 (1066 aa).

Polar residues predominate over residues 1–15 (MSWLRTSPLRQSLTR). Residues 1–33 (MSWLRTSPLRQSLTRNSGGNGSGGSGNSGNASA) form a disordered region. Residues 18–27 (GGNGSGGSGN) show a composition bias toward gly residues. At serine 512 the chain carries Phosphoserine. 3 disordered regions span residues 647–688 (SFKW…NSSG), 827–885 (DNSP…RSDN), and 942–1010 (SRGV…FNSE). Residues 658-687 (NDATTTTATSDPDVEHNNSSNHNNSSINSS) are compositionally biased toward low complexity. Phosphoserine is present on serine 829. Low complexity predominate over residues 836–856 (HQQQQLQHTTNSTHQQQQAQQ). A compositionally biased stretch (polar residues) spans 950-963 (PRGNTCETSLSTTP). Residues 967 to 996 (AQATSASSTNSSIGGSTQTLSATHSSSTLH) show a composition bias toward low complexity. Polar residues predominate over residues 1001-1010 (GPQTASFNSE).

This sequence belongs to the FHIP family.

The polypeptide is FHIP family protein GH13096 (Drosophila grimshawi (Hawaiian fruit fly)).